The primary structure comprises 85 residues: N.vectensis toxin 6 (85 aa).

A signal peptide spans 1–20 (MISFKTVIVCLFLWVVIIGA). Disulfide bonds link Cys-46/Cys-82, Cys-48/Cys-71, and Cys-64/Cys-83.

Functionally, probable toxin. In Nematostella vectensis (Starlet sea anemone), this protein is N.vectensis toxin 6.